A 96-amino-acid chain; its full sequence is UPF0251 protein Ssed_3913 (96 aa).

The protein belongs to the UPF0251 family.

This chain is UPF0251 protein Ssed_3913, found in Shewanella sediminis (strain HAW-EB3).